A 901-amino-acid polypeptide reads, in one-letter code: MAANFKEQSKKHFDLNGQSYTYYDLKAVEEQGITKVSKLPYSIRVLLESLLRQEDDFVITDDHIKALSQFGKDGNEGEVPFKPSRVILQDFTGVPAVVDLASLRKAMDDVGGDITKINPEVPVDLVIDHSVQVDSYANPEALERNMKLEFERNYERYQFLNWATKAFDNYNAVPPATGIVHQVNLEYLASVVHVRDVDGEKTAFPDTLVGTDSHTTMINGIGVLGWGVGGIEAEAGMLGQPSYFPIPEVIGVRLVNSLPQGATATDLALRVTQELRKKGVVGKFVEFFGPGVQHLPLADRATIANMAPEYGATCGFFPVDDESLKYMKLTGRSDEHIALVKEYLKQNHMFFDVEKEDPNYTDVIELDLSTVEASLSGPKRPQDLIFLSDMKSSFENSVTAPAGNQGHGLDKSEFDKKAEINFKDGSKATMKTGDIAIAAITSCTNTSNPYVMLGAGLVAKKAVEKGLKVPEYVKTSLAPGSKVVTGYLRGAGLQPYLDDLGFNLVGYGCTTCIGNSGPLLPEIEKAIADEDLLVTSVLSGNRNFEGRIHPLVKANYLASPQLVVAYALAGSVDIDLQNEPIGKGNDGEDVYLKDIWPSIKEVSDTVDSVVTPELFIEEYNNVYNNNELWNEIDVTDQPLYDFDPNSTYIQNPSFFQGLSKEPGTIVPLNGLRVMGKFGDSVTTDHISPAGAIGKDTPAGKYLQDHQVPIREFNSYGSRRGNHEVMVRGTFANIRIKNQLAPGTEGGFTTYWPTNEVMPIFDAAMKYKEDGTGLVVLAGNDYGMGSSRDWAAKGTNLLGVKTVIAQSYERIHRSNLVMMGVLPLEFKKGESADSLGLDGTEEISVNIDENVQPHDYVKVTAKKQDGDLVEFDAMVRFDSLVEMDYYRHGGILQMVLRNKLAQ.

The [4Fe-4S] cluster site is built by cysteine 443, cysteine 509, and cysteine 512.

The protein belongs to the aconitase/IPM isomerase family. As to quaternary structure, monomer. [4Fe-4S] cluster is required as a cofactor.

It catalyses the reaction citrate = D-threo-isocitrate. The catalysed reaction is (2S,3R)-3-hydroxybutane-1,2,3-tricarboxylate = 2-methyl-cis-aconitate + H2O. The protein operates within carbohydrate metabolism; tricarboxylic acid cycle; isocitrate from oxaloacetate: step 2/2. It participates in organic acid metabolism; propanoate degradation. Involved in the catabolism of short chain fatty acids (SCFA) via the tricarboxylic acid (TCA)(acetyl degradation route) and probably the 2-methylcitrate cycle I (propionate degradation route). Catalyzes the reversible isomerization of citrate to isocitrate via cis-aconitate. Could catalyze the hydration of 2-methyl-cis-aconitate to yield (2R,3S)-2-methylisocitrate. The apo form of AcnA functions as a RNA-binding regulatory protein. This chain is Aconitate hydratase A (acnA), found in Staphylococcus aureus (strain MRSA252).